A 343-amino-acid polypeptide reads, in one-letter code: E3 ubiquitin-protein ligase SP1 (343 aa).

Residues 1–21 traverse the membrane as a helical segment; that stretch reads MIPWGGVTCCLSAAALYLLGR. Residues 22–222 are Chloroplast intermembrane-facing; the sequence is SSGRDAEVLE…LISNLGKWSR (201 aa). A helical membrane pass occupies residues 223–244; sequence LYKYASMGFTVLGVFLITKHVI. The Cytoplasmic segment spans residues 245-343; sequence DSVLERRRRR…IDLAVKTYRH (99 aa). The segment at 296-331 adopts an RING-type zinc-finger fold; it reads CVICLEQEYNAVFVPCGHMCCCTACSSHLTSCPLCR.

Interacts with TOC33, TOC75-3 and TOC159. Auto-ubiquitinated.

It localises to the plastid. It is found in the chloroplast outer membrane. The enzyme catalyses S-ubiquitinyl-[E2 ubiquitin-conjugating enzyme]-L-cysteine + [acceptor protein]-L-lysine = [E2 ubiquitin-conjugating enzyme]-L-cysteine + N(6)-ubiquitinyl-[acceptor protein]-L-lysine.. It participates in protein modification; protein ubiquitination. Functionally, E3 ubiquitin-protein ligase involved in the regulation of protein import in the chloroplast. Associates with TOC complexes and mediates ubiquitination of TOC components, promoting their degradation via the ubiquitin-proteasome system (UPS). Plays a role in the reorganization of the TOC machinery. Involved in a mechanism that regulates plastid biogenesis via UPS. Promotes stress tolerance by depleting the chloroplast protein import apparatus, which limits photosystem assembly and the potential for reactive oxygen species (ROS) formation. May act as negative regulator of programmed cell death (PCD) during biotic stress. This is E3 ubiquitin-protein ligase SP1 from Arabidopsis thaliana (Mouse-ear cress).